A 700-amino-acid polypeptide reads, in one-letter code: Elongation factor G 2 (700 aa).

In terms of domain architecture, tr-type G spans 8 to 290 (ERYRNIGISA…AVIDFLPSPV (283 aa)). GTP is bound by residues 17–24 (AHIDAGKT), 88–92 (DTPGH), and 142–145 (NKMD).

The protein belongs to the TRAFAC class translation factor GTPase superfamily. Classic translation factor GTPase family. EF-G/EF-2 subfamily.

Its subcellular location is the cytoplasm. Catalyzes the GTP-dependent ribosomal translocation step during translation elongation. During this step, the ribosome changes from the pre-translocational (PRE) to the post-translocational (POST) state as the newly formed A-site-bound peptidyl-tRNA and P-site-bound deacylated tRNA move to the P and E sites, respectively. Catalyzes the coordinated movement of the two tRNA molecules, the mRNA and conformational changes in the ribosome. This chain is Elongation factor G 2, found in Burkholderia orbicola (strain AU 1054).